A 174-amino-acid chain; its full sequence is Crossover junction endodeoxyribonuclease RuvC (174 aa).

Active-site residues include Asp8, Glu67, and Asp139. Residues Asp8, Glu67, and Asp139 each coordinate Mg(2+).

It belongs to the RuvC family. In terms of assembly, homodimer which binds Holliday junction (HJ) DNA. The HJ becomes 2-fold symmetrical on binding to RuvC with unstacked arms; it has a different conformation from HJ DNA in complex with RuvA. In the full resolvosome a probable DNA-RuvA(4)-RuvB(12)-RuvC(2) complex forms which resolves the HJ. Mg(2+) is required as a cofactor.

The protein resides in the cytoplasm. The enzyme catalyses Endonucleolytic cleavage at a junction such as a reciprocal single-stranded crossover between two homologous DNA duplexes (Holliday junction).. Its function is as follows. The RuvA-RuvB-RuvC complex processes Holliday junction (HJ) DNA during genetic recombination and DNA repair. Endonuclease that resolves HJ intermediates. Cleaves cruciform DNA by making single-stranded nicks across the HJ at symmetrical positions within the homologous arms, yielding a 5'-phosphate and a 3'-hydroxyl group; requires a central core of homology in the junction. The consensus cleavage sequence is 5'-(A/T)TT(C/G)-3'. Cleavage occurs on the 3'-side of the TT dinucleotide at the point of strand exchange. HJ branch migration catalyzed by RuvA-RuvB allows RuvC to scan DNA until it finds its consensus sequence, where it cleaves and resolves the cruciform DNA. The protein is Crossover junction endodeoxyribonuclease RuvC of Pseudomonas fluorescens (strain ATCC BAA-477 / NRRL B-23932 / Pf-5).